Reading from the N-terminus, the 674-residue chain is Primary amine oxidase (674 aa).

The first 25 residues, 1–25, serve as a signal peptide directing secretion; it reads MASTTTMRLALFSVLTLLSFHAVVS. Asparagine 156 carries an N-linked (GlcNAc...) asparagine glycan. A disulfide bridge links cysteine 162 with cysteine 183. The span at 226-236 shows a compositional bias: polar residues; the sequence is ENTEYQVSKQS. The disordered stretch occupies residues 226 to 251; the sequence is ENTEYQVSKQSPPFGPKQHSLTSHQP. 323–334 lines the substrate pocket; it reads FFDSGEFGFGLS. Residue aspartate 325 is the Proton acceptor of the active site. An intrachain disulfide couples cysteine 344 to cysteine 370. N-linked (GlcNAc...) asparagine glycosylation is present at asparagine 389. A substrate-binding site is contributed by 409 to 414; sequence VGNYDN. The active-site Schiff-base intermediate with substrate; via topaquinone is the tyrosine 412. At tyrosine 412 the chain carries 2',4',5'-topaquinone. Positions 467 and 469 each coordinate Cu cation. The Mn(2+) site is built by aspartate 476, phenylalanine 477, aspartate 478, aspartate 617, and isoleucine 618. Histidine 628 serves as a coordination point for Cu cation.

Belongs to the copper/topaquinone oxidase family. In terms of assembly, homodimer. Cu cation is required as a cofactor. The cofactor is Mn(2+). Requires L-topaquinone as cofactor. Topaquinone (TPQ) is generated by copper-dependent autoxidation of a specific tyrosyl residue.

The enzyme catalyses a primary methyl amine + O2 + H2O = an aldehyde + H2O2 + NH4(+). The polypeptide is Primary amine oxidase (Pisum sativum (Garden pea)).